Consider the following 222-residue polypeptide: UPF0758 protein Mpe_A2695 (222 aa).

The 123-residue stretch at 100-222 folds into the MPN domain; it reads VFDSPQAVKD…VVSFAERGLL (123 aa). 3 residues coordinate Zn(2+): His171, His173, and Asp184. Residues 171–184 carry the JAMM motif motif; that stretch reads HNHPSGVAEPSRAD.

Belongs to the UPF0758 family.

In Methylibium petroleiphilum (strain ATCC BAA-1232 / LMG 22953 / PM1), this protein is UPF0758 protein Mpe_A2695.